The following is a 326-amino-acid chain: Glycine N(alpha)-acyltransferase (326 aa).

The protein belongs to the acetyltransferase family.

The catalysed reaction is a (3R)-hydroxyacyl-[ACP] + glycine = a lyso-glycine lipid + holo-[ACP] + H(+). The enzyme catalyses (3R)-hydroxyhexadecanoyl-[ACP] + glycine = N-[(3R)-3-hydroxyhexadecanoyl]-glycine + holo-[ACP] + H(+). It functions in the pathway lipid metabolism. In terms of biological role, is involved in the production of glycine lipids (GL), which are phosphorus-free membrane lipids. Catalyzes the first step of GL biosynthesis, i.e. the N-acylation of glycine via addition of a 3-hydroxy fatty acyl group, to form a range of monoacylated glycine (also named lyso-glycine lipids or lyso-GL). As an example, catalyzes the production of commendamide, an N-acylated (3-OH C16:0) derivative of glycine with hemolytic activity and the ability to solubilize cholesterol micelles; this compound can also activate NF-kB through the G-protein coupled receptor GPCR G2A/132. The polypeptide is Glycine N(alpha)-acyltransferase (Phocaeicola vulgatus (strain ATCC 8482 / DSM 1447 / JCM 5826 / CCUG 4940 / NBRC 14291 / NCTC 11154) (Bacteroides vulgatus)).